The sequence spans 209 residues: Segregation and condensation protein B (209 aa).

The protein belongs to the ScpB family. In terms of assembly, homodimer. Homodimerization may be required to stabilize the binding of ScpA to the Smc head domains. Component of a cohesin-like complex composed of ScpA, ScpB and the Smc homodimer, in which ScpA and ScpB bind to the head domain of Smc. The presence of the three proteins is required for the association of the complex with DNA.

The protein resides in the cytoplasm. Participates in chromosomal partition during cell division. May act via the formation of a condensin-like complex containing Smc and ScpA that pull DNA away from mid-cell into both cell halves. The chain is Segregation and condensation protein B from Geobacillus thermodenitrificans (strain NG80-2).